Here is a 521-residue protein sequence, read N- to C-terminus: T-box transcription factor TBX5 (521 aa).

The segment at 1 to 45 is disordered; it reads MADTEEGFGLPSTPVDSEAKELQAEAKQDPQLGTTSKAPTSPQAA. The segment covering 17-28 has biased composition (basic and acidic residues); the sequence is SEAKELQAEAKQ. Residues 31–45 show a composition bias toward polar residues; sequence QLGTTSKAPTSPQAA. A DNA-binding region (T-box) is located at residues 63–238; sequence LWLKFHEVGT…NNPFAKGFRG (176 aa). Disordered regions lie at residues 254–281 and 332–352; these read EYPV…TRVL and STTE…EEDP. Residues 262 to 281 show a composition bias toward polar residues; it reads TVRQKVSSNHSPFSGETRVL.

Monomer. Homodimer (via the T-box); binds DNA as homodimer.

The protein localises to the nucleus. It is found in the cytoplasm. DNA-binding protein that regulates the transcription of several genes and is involved in heart development and limb pattern formation. May bind to the core DNA motif of promoters. The chain is T-box transcription factor TBX5 (TBX5) from Gallus gallus (Chicken).